A 347-amino-acid polypeptide reads, in one-letter code: NADH-ubiquinone oxidoreductase chain 2 (347 aa).

Transmembrane regions (helical) follow at residues Met1 to Thr21, His25 to Met45, Tyr59 to Val79, Ile96 to Pro116, Gly127 to Pro147, Ile149 to Gly169, Ile178 to Pro198, Thr201 to Leu221, Leu240 to Phe260, Asp274 to Met294, and Ile326 to Leu346.

This sequence belongs to the complex I subunit 2 family. Core subunit of respiratory chain NADH dehydrogenase (Complex I) which is composed of 45 different subunits. Interacts with TMEM242.

Its subcellular location is the mitochondrion inner membrane. It catalyses the reaction a ubiquinone + NADH + 5 H(+)(in) = a ubiquinol + NAD(+) + 4 H(+)(out). Functionally, core subunit of the mitochondrial membrane respiratory chain NADH dehydrogenase (Complex I) which catalyzes electron transfer from NADH through the respiratory chain, using ubiquinone as an electron acceptor. Essential for the catalytic activity and assembly of complex I. The protein is NADH-ubiquinone oxidoreductase chain 2 of Dobsonia minor (Lesser bare-backed fruit bat).